The chain runs to 562 residues: Glutamate--tRNA ligase (562 aa).

The 'HIGH' region motif lies at 101-111; it reads PEPNGYPHIGH.

It belongs to the class-I aminoacyl-tRNA synthetase family. Glutamate--tRNA ligase type 2 subfamily.

The protein resides in the cytoplasm. It carries out the reaction tRNA(Glu) + L-glutamate + ATP = L-glutamyl-tRNA(Glu) + AMP + diphosphate. Catalyzes the attachment of glutamate to tRNA(Glu) in a two-step reaction: glutamate is first activated by ATP to form Glu-AMP and then transferred to the acceptor end of tRNA(Glu). This Cenarchaeum symbiosum (strain A) protein is Glutamate--tRNA ligase.